The sequence spans 264 residues: SPARC (264 aa).

The signal sequence occupies residues Met-1 to Ser-16. The Follistatin-like domain occupies Pro-52–Cys-74. Disulfide bonds link Cys-53-Cys-64, Cys-58-Cys-74, Cys-76-Cys-110, Cys-80-Cys-103, Cys-92-Cys-135, Cys-141-Cys-228, and Cys-236-Cys-252. In terms of domain architecture, Kazal-like spans Lys-68–Lys-137. A glycan (N-linked (GlcNAc...) asparagine) is linked at Asn-96. In terms of domain architecture, EF-hand spans Pro-224–Glu-259. Residues Asp-237, Asn-239, Asp-241, Asn-243, and Glu-248 each coordinate Ca(2+). The N-linked (GlcNAc...) asparagine glycan is linked to Asn-243.

This sequence belongs to the SPARC family. Expressed by body wall and sex muscle cells. Probable association with basement membranes.

It localises to the secreted. The protein localises to the extracellular space. It is found in the extracellular matrix. Its subcellular location is the basement membrane. Functionally, has a high affinity for collagen. Affects nematode body morphology and mobility. Essential for C.elegans development and muscle function. The cysteine-rich region could have protease inhibitory activity or may provide the framework for a protein binding module. Probable role in skeletal morphogenesis. This is SPARC (ost-1) from Caenorhabditis elegans.